Consider the following 462-residue polypeptide: Cysteine--tRNA ligase (462 aa).

Cys-24 provides a ligand contact to Zn(2+). The 'HIGH' region signature appears at 26 to 36 (PTVYDDAHLGH). The Zn(2+) site is built by Cys-199, His-224, and Glu-228. Residues 256–260 (KMSKS) carry the 'KMSKS' region motif. Lys-259 is a binding site for ATP.

Belongs to the class-I aminoacyl-tRNA synthetase family. As to quaternary structure, monomer. It depends on Zn(2+) as a cofactor.

The protein resides in the cytoplasm. The enzyme catalyses tRNA(Cys) + L-cysteine + ATP = L-cysteinyl-tRNA(Cys) + AMP + diphosphate. The chain is Cysteine--tRNA ligase from Campylobacter jejuni subsp. jejuni serotype O:6 (strain 81116 / NCTC 11828).